The primary structure comprises 98 residues: Hainantoxin-XVII-2 (98 aa).

A signal peptide spans 1 to 40 (MTTVGVSLFRRSPEKITMKIATFLGLSFLLIASYVLICEA). Residues 41-64 (QHPGFQELLILEENMRDPENSKER) constitute a propeptide that is removed on maturation. Intrachain disulfides connect C66/C81 and C73/C85.

This sequence belongs to the hainantoxin family. 17 subfamily. In terms of tissue distribution, expressed by the venom gland.

Its subcellular location is the secreted. Putative ion channel inhibitor. This chain is Hainantoxin-XVII-2, found in Cyriopagopus hainanus (Chinese bird spider).